The sequence spans 350 residues: Anthranilate phosphoribosyltransferase (350 aa).

Residues Gly-81, 84 to 85 (GD), Thr-89, 91 to 94 (NIST), 109 to 117 (KHGGRSVSS), and Ser-121 contribute to the 5-phospho-alpha-D-ribose 1-diphosphate site. Residue Gly-81 coordinates anthranilate. Ser-93 provides a ligand contact to Mg(2+). Arg-167 contributes to the anthranilate binding site. Asp-230 and Glu-231 together coordinate Mg(2+).

The protein belongs to the anthranilate phosphoribosyltransferase family. As to quaternary structure, homodimer. It depends on Mg(2+) as a cofactor.

The catalysed reaction is N-(5-phospho-beta-D-ribosyl)anthranilate + diphosphate = 5-phospho-alpha-D-ribose 1-diphosphate + anthranilate. The protein operates within amino-acid biosynthesis; L-tryptophan biosynthesis; L-tryptophan from chorismate: step 2/5. Its function is as follows. Catalyzes the transfer of the phosphoribosyl group of 5-phosphorylribose-1-pyrophosphate (PRPP) to anthranilate to yield N-(5'-phosphoribosyl)-anthranilate (PRA). The chain is Anthranilate phosphoribosyltransferase from Nitrosospira multiformis (strain ATCC 25196 / NCIMB 11849 / C 71).